Consider the following 246-residue polypeptide: Metallo-beta-lactamase type 2 (246 aa).

The N-terminal stretch at 1-20 (MKKLFVLCVCFFCSITAAGA) is a signal peptide. 5 residues coordinate Zn(2+): histidine 95, histidine 97, aspartate 99, histidine 157, and cysteine 176. A beta-lactam is bound at residue aspartate 99. A beta-lactam is bound by residues lysine 179 and asparagine 185. Histidine 215 is a binding site for Zn(2+).

This sequence belongs to the metallo-beta-lactamase superfamily. Class-B beta-lactamase family. As to quaternary structure, monomer. Zn(2+) is required as a cofactor.

The protein resides in the periplasm. The catalysed reaction is a beta-lactam + H2O = a substituted beta-amino acid. Its function is as follows. Confers resistance to the different beta-lactam antibiotics (penicillin, cephalosporin and carbapenem) via the hydrolysis of the beta-lactam ring. Exhibits higher catalytic efficiency toward ticarcillin and piperacillin than blaIMP-1. Exhibits catalytic activity for carbapenem compounds, but has a preference for imipenem and ertapenem over meropenem. Has high efficiency for the hydrolysis of cefuroxime. Exhibits hydrolysis of all cephalosporins tested. Exhibits no hydrolysis of temocillin, the 6-alpha-methoxy semisynthetic derivative of ticarcillin. In Pseudomonas aeruginosa, this protein is Metallo-beta-lactamase type 2.